A 449-amino-acid polypeptide reads, in one-letter code: NADH-quinone oxidoreductase subunit D (449 aa).

This sequence belongs to the complex I 49 kDa subunit family. As to quaternary structure, NDH-1 is composed of 14 different subunits. Subunits NuoB, C, D, E, F, and G constitute the peripheral sector of the complex.

It is found in the cell membrane. The catalysed reaction is a quinone + NADH + 5 H(+)(in) = a quinol + NAD(+) + 4 H(+)(out). In terms of biological role, NDH-1 shuttles electrons from NADH, via FMN and iron-sulfur (Fe-S) centers, to quinones in the respiratory chain. The immediate electron acceptor for the enzyme in this species is believed to be a menaquinone. Couples the redox reaction to proton translocation (for every two electrons transferred, four hydrogen ions are translocated across the cytoplasmic membrane), and thus conserves the redox energy in a proton gradient. This chain is NADH-quinone oxidoreductase subunit D, found in Saccharopolyspora erythraea (strain ATCC 11635 / DSM 40517 / JCM 4748 / NBRC 13426 / NCIMB 8594 / NRRL 2338).